We begin with the raw amino-acid sequence, 176 residues long: Inner membrane-spanning protein YciB (176 aa).

Transmembrane regions (helical) follow at residues 3 to 23, 24 to 44, 49 to 69, 81 to 101, 121 to 141, and 149 to 169; these read FLFD…WGIF, TATA…AFRH, TMLW…LVLH, LYWL…NNLI, VAWA…VHNF, and FKLF…SLWL.

It belongs to the YciB family.

It localises to the cell inner membrane. In terms of biological role, plays a role in cell envelope biogenesis, maintenance of cell envelope integrity and membrane homeostasis. This chain is Inner membrane-spanning protein YciB, found in Burkholderia lata (strain ATCC 17760 / DSM 23089 / LMG 22485 / NCIMB 9086 / R18194 / 383).